Here is a 175-residue protein sequence, read N- to C-terminus: uncharacterized protein (175 aa).

This is an uncharacterized protein from Archaeoglobus fulgidus (strain ATCC 49558 / DSM 4304 / JCM 9628 / NBRC 100126 / VC-16).